The primary structure comprises 516 residues: L-amino acid oxidase Lm29 (516 aa).

The signal sequence occupies residues 1-18 (MNVFFMFSLLFLAALGSC). An intrachain disulfide couples Cys-28 to Cys-191. Residues 61 to 62 (MS), 81 to 82 (EA), Arg-89, and 105 to 108 (GPMR) each bind FAD. Residue Arg-108 participates in substrate binding. N-linked (GlcNAc...) asparagine glycosylation is present at Asn-190. Residue His-241 participates in substrate binding. Val-279 lines the FAD pocket. Cys-349 and Cys-430 form a disulfide bridge. N-linked (GlcNAc...) asparagine glycosylation occurs at Asn-379. Tyr-390 provides a ligand contact to substrate. FAD is bound by residues Glu-475 and 482 to 487 (GWIDST). Residue 482 to 483 (GW) coordinates substrate.

Belongs to the flavin monoamine oxidase family. FIG1 subfamily. As to quaternary structure, homodimer; non-covalently linked. Requires FAD as cofactor. Expressed by the venom gland.

It localises to the secreted. The enzyme catalyses an L-alpha-amino acid + O2 + H2O = a 2-oxocarboxylate + H2O2 + NH4(+). The catalysed reaction is L-leucine + O2 + H2O = 4-methyl-2-oxopentanoate + H2O2 + NH4(+). It carries out the reaction L-phenylalanine + O2 + H2O = 3-phenylpyruvate + H2O2 + NH4(+). It catalyses the reaction L-tryptophan + O2 + H2O = indole-3-pyruvate + H2O2 + NH4(+). The enzyme catalyses L-methionine + O2 + H2O = 4-methylsulfanyl-2-oxobutanoate + H2O2 + NH4(+). The catalysed reaction is L-isoleucine + O2 + H2O = (S)-3-methyl-2-oxopentanoate + H2O2 + NH4(+). It carries out the reaction L-tyrosine + O2 + H2O = 3-(4-hydroxyphenyl)pyruvate + H2O2 + NH4(+). In terms of biological role, catalyzes an oxidative deamination of predominantly hydrophobic and aromatic L-amino acids, thus producing hydrogen peroxide that may contribute to the diverse toxic effects of this enzyme. Is highly active on L-Met=L-Leu&gt;&gt;L-Phe&gt;L-Trp&gt;L-Tyr&gt;L-Ile, and weakly or not active on L-His, L-Arg, L-Val, L-Gln, L-Thr, L-Lys, and L-Ser. Exhibits a low myotoxicity (a mild myonecrosis is observed after injection in mice quadriceps muscle). In vitro, is cytotoxic to a lot of human cell lines, including AGS (IC(50)=22.7 ug/ml), MCF-7 (IC(50)=1.4 ug/ml), HL-60, HeLa and Jurkat cells, as well as to the parasite Leishmania brasiliensis (IC(50)=2.22 ug/ml). This cytotoxicity is dependent on the production of hydrogen peroxyde, since it is inhibited by catalase, a hydrogen peroxyde scavenger. In Lachesis muta (South American bushmaster), this protein is L-amino acid oxidase Lm29.